We begin with the raw amino-acid sequence, 346 residues long: Biotin synthase (346 aa).

Positions 38–256 constitute a Radical SAM core domain; the sequence is QQVQVSTLLS…IAVARIMMPT (219 aa). Residues Cys53, Cys57, and Cys60 each coordinate [4Fe-4S] cluster. Residues Cys97, Cys128, Cys188, and Arg260 each coordinate [2Fe-2S] cluster.

It belongs to the radical SAM superfamily. Biotin synthase family. As to quaternary structure, homodimer. [4Fe-4S] cluster serves as cofactor. Requires [2Fe-2S] cluster as cofactor.

It carries out the reaction (4R,5S)-dethiobiotin + (sulfur carrier)-SH + 2 reduced [2Fe-2S]-[ferredoxin] + 2 S-adenosyl-L-methionine = (sulfur carrier)-H + biotin + 2 5'-deoxyadenosine + 2 L-methionine + 2 oxidized [2Fe-2S]-[ferredoxin]. It participates in cofactor biosynthesis; biotin biosynthesis; biotin from 7,8-diaminononanoate: step 2/2. Its function is as follows. Catalyzes the conversion of dethiobiotin (DTB) to biotin by the insertion of a sulfur atom into dethiobiotin via a radical-based mechanism. The protein is Biotin synthase of Salmonella choleraesuis (strain SC-B67).